The following is a 334-amino-acid chain: D-alanine--D-alanine ligase (334 aa).

The ATP-grasp domain maps to 110–306; sequence KHVLKSLGID…FDHVVDLIVQ (197 aa). Residue 138-190 participates in ATP binding; that stretch reads LPYPFVIKPVRGGSTIGVHAIFSKSEYLDLSAHADTLEDRMIVEEYVSGQEVQ. Residues aspartate 258, glutamate 272, and asparagine 274 each coordinate Mg(2+).

The protein belongs to the D-alanine--D-alanine ligase family. The cofactor is Mg(2+). It depends on Mn(2+) as a cofactor.

It localises to the cytoplasm. It carries out the reaction 2 D-alanine + ATP = D-alanyl-D-alanine + ADP + phosphate + H(+). It participates in cell wall biogenesis; peptidoglycan biosynthesis. Its function is as follows. Cell wall formation. The polypeptide is D-alanine--D-alanine ligase (Anaplasma marginale (strain Florida)).